The following is a 345-amino-acid chain: Neurotrimin (345 aa).

Residues 1–30 form the signal peptide; it reads MGVCGSLFLPWKCLVVVSLRLLFLVPTGVP. Ig-like C2-type domains lie at 39–126, 136–218, and 222–309; these read PKAM…PKTS, PKIV…VKVT, and PPYI…ASIT. 3 N-linked (GlcNAc...) asparagine glycosylation sites follow: Asn44, Asn70, and Asn152. A disulfide bridge connects residues Cys57 and Cys115. 2 cysteine pairs are disulfide-bonded: Cys157–Cys201 and Cys243–Cys295. N-linked (GlcNAc...) asparagine glycosylation is found at Asn284, Asn292, Asn305, and Asn321. Asn321 is lipidated: GPI-anchor amidated asparagine. A propeptide spans 322–345 (removed in mature form); that stretch reads GTSSRRAGCLWLLPLLVLHLLLKF.

Belongs to the immunoglobulin superfamily. IgLON family.

The protein localises to the cell membrane. In terms of biological role, neural cell adhesion molecule. In Bos taurus (Bovine), this protein is Neurotrimin (NTM).